A 936-amino-acid chain; its full sequence is Protocadherin alpha-5 (936 aa).

The signal sequence occupies residues 1-28; sequence MVYSRRGSLGSRLLLLWLLLAYWKAGSG. Residues 29–696 lie on the Extracellular side of the membrane; it reads QLHYSIPEEA…GPEAALVDVN (668 aa). Cadherin domains lie at 33–132, 156–241, 242–349, 350–454, 455–564, and 580–677; these read SIPE…PPRF, ASDL…APEF, DKSI…TPEM, AITT…LRAF, AQPQ…APAL, and VPRS…APKA. Residues Asn-264, Asn-448, and Asn-547 are each glycosylated (N-linked (GlcNAc...) asparagine). The helical transmembrane segment at 697–717 threads the bilayer; that stretch reads VYLIIAICAVSSLLVLTLLLY. Residues 718–936 lie on the Cytoplasmic side of the membrane; that stretch reads TALRCSAQPT…GNSTTDNSDQ (219 aa). Disordered regions lie at residues 759–793, 815–875, and 887–936; these read SGEAPPKTDLMAFSPSLPQGPTSTDNPRQPNPDWR, RAGP…DKFI, and QEPA…NSDQ. PXXP repeat units follow at residues 773–776, 785–788, 818–821, 873–876, and 877–890; these read PSLP, PRQP, PGGP, KFII, and PGSPAIISIRQEPA. The tract at residues 773–890 is 5 X 4 AA repeats of P-X-X-P; sequence PSLPQGPTST…AIISIRQEPA (118 aa). The span at 774–786 shows a compositional bias: polar residues; it reads SLPQGPTSTDNPR. Positions 895 to 909 are enriched in basic and acidic residues; the sequence is DKSDFITFGKKEETK.

The protein localises to the cell membrane. Its function is as follows. Potential calcium-dependent cell-adhesion protein. May be involved in the establishment and maintenance of specific neuronal connections in the brain. This chain is Protocadherin alpha-5 (PCDHA5), found in Pan troglodytes (Chimpanzee).